A 90-amino-acid polypeptide reads, in one-letter code: Acylphosphatase (90 aa).

One can recognise an Acylphosphatase-like domain in the interval arginine 3 to tyrosine 90. Active-site residues include arginine 18 and asparagine 36.

This sequence belongs to the acylphosphatase family.

It carries out the reaction an acyl phosphate + H2O = a carboxylate + phosphate + H(+). In Clostridium beijerinckii (strain ATCC 51743 / NCIMB 8052) (Clostridium acetobutylicum), this protein is Acylphosphatase (acyP).